We begin with the raw amino-acid sequence, 499 residues long: Guanosine-5'-triphosphate,3'-diphosphate pyrophosphatase (499 aa).

The protein belongs to the GppA/Ppx family. GppA subfamily.

The enzyme catalyses guanosine 3'-diphosphate 5'-triphosphate + H2O = guanosine 3',5'-bis(diphosphate) + phosphate + H(+). The protein operates within purine metabolism; ppGpp biosynthesis; ppGpp from GTP: step 2/2. In terms of biological role, catalyzes the conversion of pppGpp to ppGpp. Guanosine pentaphosphate (pppGpp) is a cytoplasmic signaling molecule which together with ppGpp controls the 'stringent response', an adaptive process that allows bacteria to respond to amino acid starvation, resulting in the coordinated regulation of numerous cellular activities. This chain is Guanosine-5'-triphosphate,3'-diphosphate pyrophosphatase, found in Klebsiella pneumoniae subsp. pneumoniae (strain ATCC 700721 / MGH 78578).